We begin with the raw amino-acid sequence, 199 residues long: Small ribosomal subunit protein uS4 (199 aa).

The region spanning 91-153 (ARLDNVVYRM…SKNFVVIKEA (63 aa)) is the S4 RNA-binding domain.

Belongs to the universal ribosomal protein uS4 family. In terms of assembly, part of the 30S ribosomal subunit. Contacts protein S5. The interaction surface between S4 and S5 is involved in control of translational fidelity.

Its function is as follows. One of the primary rRNA binding proteins, it binds directly to 16S rRNA where it nucleates assembly of the body of the 30S subunit. With S5 and S12 plays an important role in translational accuracy. In Exiguobacterium sibiricum (strain DSM 17290 / CCUG 55495 / CIP 109462 / JCM 13490 / 255-15), this protein is Small ribosomal subunit protein uS4.